A 253-amino-acid polypeptide reads, in one-letter code: Putative cysteine-rich repeat secretory protein 33 (253 aa).

An N-terminal signal peptide occupies residues 1 to 28 (MFSSYSLCKCLVSFHILAIQVLISCASS). Gnk2-homologous domains lie at 34 to 133 (EYLN…MIND) and 141 to 250 (YDNI…LYPF).

It belongs to the cysteine-rich repeat secretory protein family.

The protein resides in the secreted. The protein is Putative cysteine-rich repeat secretory protein 33 (CRRSP33) of Arabidopsis thaliana (Mouse-ear cress).